The following is a 286-amino-acid chain: Thiamine-monophosphate kinase (286 aa).

The Mg(2+) site is built by Asp22, Ser36, Thr37, and Asp38. Asp45 serves as a coordination point for substrate. Mg(2+) is bound by residues Asp66 and Asp111. ATP contacts are provided by residues 110–111 and Arg136; that span reads GD. A Mg(2+)-binding site is contributed by Asp191. Ser193 contacts ATP. Asp194 contacts Mg(2+). Tyr282 contributes to the substrate binding site.

The protein belongs to the thiamine-monophosphate kinase family.

The catalysed reaction is thiamine phosphate + ATP = thiamine diphosphate + ADP. It functions in the pathway cofactor biosynthesis; thiamine diphosphate biosynthesis; thiamine diphosphate from thiamine phosphate: step 1/1. Catalyzes the ATP-dependent phosphorylation of thiamine-monophosphate (TMP) to form thiamine-pyrophosphate (TPP), the active form of vitamin B1. The protein is Thiamine-monophosphate kinase of Methanospirillum hungatei JF-1 (strain ATCC 27890 / DSM 864 / NBRC 100397 / JF-1).